The sequence spans 275 residues: tRNA (guanine-N(7)-)-methyltransferase (275 aa).

Positions 1–73 (MRHHGRMHAR…GGQQDTWERL (73 aa)) are disordered. Basic residues predominate over residues 46–59 (AHRHRRVTSFRSRR). 4 residues coordinate S-adenosyl-L-methionine: Glu107, Glu132, Asp159, and Asp182. Asp182 is an active-site residue. Substrate is bound by residues Lys186, Asp218, and 254-257 (TKYE).

The protein belongs to the class I-like SAM-binding methyltransferase superfamily. TrmB family.

The enzyme catalyses guanosine(46) in tRNA + S-adenosyl-L-methionine = N(7)-methylguanosine(46) in tRNA + S-adenosyl-L-homocysteine. Its pathway is tRNA modification; N(7)-methylguanine-tRNA biosynthesis. Its function is as follows. Catalyzes the formation of N(7)-methylguanine at position 46 (m7G46) in tRNA. This chain is tRNA (guanine-N(7)-)-methyltransferase, found in Mycobacterium sp. (strain KMS).